A 1063-amino-acid chain; its full sequence is E3 ubiquitin-protein ligase PDZRN3 (1063 aa).

Residues 18–56 form an RING-type; degenerate zinc finger; that stretch reads CALCHKVLEDPLTTPCGHVFCAGCVLPWVVQEGSCPARC. The segment at 100-158 adopts a TRAF-type zinc-finger fold; the sequence is EHLERCDFAPARCRHAGCGQLLLRRDVEAHMRDACDARPVGRCQEGCGLPLTHGEQRAG. 2 PDZ domains span residues 249-339 and 419-503; these read TLVL…LRRT and EVGL…IARP. Position 427 is a phosphoserine (serine 427). Positions 545–602 are disordered; sequence QKKHEEDGGTTDTATILSNQHEKDSGVGRTDESTRNDESSEQENNGEDATASANPLAG. Residues 554-563 are compositionally biased toward polar residues; it reads TTDTATILSN. The segment covering 564 to 582 has biased composition (basic and acidic residues); that stretch reads QHEKDSGVGRTDESTRNDE. A coiled-coil region spans residues 680-705; that stretch reads ESVDKELELLNEELRSIELECLSIVR. Positions 746 to 755 are enriched in basic and acidic residues; it reads ELPEKSDKDS. 2 disordered regions span residues 746 to 798 and 834 to 853; these read ELPE…IEAY and IKERRGSDGSRSPTASPKLG. A compositionally biased stretch (polar residues) spans 756-770; it reads SSAYNTGESCRSTPL.

Interacts with NLGN1 and EFNB2. Interacts with UBE2D2 and with MUSK via the first PDZ domain. In myotubes, the interaction between PDZRN3 and MUSK is enhanced upon agrin stimulation. In terms of processing, auto-ubiquitinated. In terms of tissue distribution, highly expressed in skeletal and cardiac muscle and at lower levels in spinal cord and brain (at protein level). Also expressed in kidney and lung. In muscles, concentrated at the neuromuscular junction (NMJ).

It localises to the synapse. The protein localises to the cytoplasm. The catalysed reaction is S-ubiquitinyl-[E2 ubiquitin-conjugating enzyme]-L-cysteine + [acceptor protein]-L-lysine = [E2 ubiquitin-conjugating enzyme]-L-cysteine + N(6)-ubiquitinyl-[acceptor protein]-L-lysine.. It functions in the pathway protein modification; protein ubiquitination. E3 ubiquitin-protein ligase. Plays an important role in regulating the surface level of MUSK on myotubes. Mediates the ubiquitination of MUSK, promoting its endocytosis and lysosomal degradation. Might contribute to terminal myogenic differentiation. The protein is E3 ubiquitin-protein ligase PDZRN3 (Pdzrn3) of Mus musculus (Mouse).